The sequence spans 490 residues: RNA-binding post-transcriptional regulator cip1 (490 aa).

3 disordered regions span residues 16-63, 76-97, and 138-199; these read RGLA…GSSA, ASSR…YSQL, and HNVS…GEDT. The span at 34-62 shows a compositional bias: polar residues; that stretch reads RLQSPLNSPKLQPIGSPQASRKTSGSGSS. A phosphoserine mark is found at Ser37, Ser41, Ser49, Ser86, and Ser141. Low complexity-rich tracts occupy residues 76–88 and 141–160; these read ASSR…PSDS and SPPS…ASGK. A compositionally biased stretch (polar residues) spans 164–192; sequence ADTSAEPSLDAFNSTQIKAGSTANSNSTP. Residues 202–280 enclose the RRM domain; it reads TAIVVKNIPF…RRLRVEWKRQ (79 aa). Phosphoserine is present on residues Ser397, Ser401, and Ser427. Position 431 is a phosphothreonine (Thr431). Phosphoserine occurs at positions 435, 456, and 466. The segment at 457–490 is disordered; that stretch reads PLQKASTLSSPFNSKNDNDASTSASKQSFGVSHF.

In terms of assembly, interacts with csx1. Post-translationally, phosphorylated by sty1.

It localises to the cytoplasm. Regulates global gene expression after oxidative stress. Interacts and stabilizes mRNAs and may regulate their transition between different cytoplasmic components after oxidative stress. This chain is RNA-binding post-transcriptional regulator cip1 (cip1), found in Schizosaccharomyces pombe (strain 972 / ATCC 24843) (Fission yeast).